Reading from the N-terminus, the 283-residue chain is E3 ubiquitin-protein ligase SGR9, amyloplastic (283 aa).

The N-terminal 32 residues, 1–32, are a transit peptide targeting the amyloplast; the sequence is MEDENTTIIMASLSALSPSHLTNLTHSILSIS. The RING-type; atypical zinc finger occupies 214 to 255; the sequence is CVICKEEMSEGRDVCEMPCQHFFHWKCILPWLSKKNTCPFCR.

Auto-ubiquitinated as part of the enzymatic reaction. As to expression, expressed in seedlings, hypocotyls, roots and stems. Present especially in hypocotyl and inflorescence endodermis, as well as in root cap columella, tissues that act as statocytes.

The protein resides in the plastid. The protein localises to the amyloplast. The catalysed reaction is S-ubiquitinyl-[E2 ubiquitin-conjugating enzyme]-L-cysteine + [acceptor protein]-L-lysine = [E2 ubiquitin-conjugating enzyme]-L-cysteine + N(6)-ubiquitinyl-[acceptor protein]-L-lysine.. It participates in protein modification; protein ubiquitination. Functionally, E3 ubiquitin-protein ligase which accepts ubiquitin from an E2 ubiquitin-conjugating enzyme in the form of a thioester and then directly transfers the ubiquitin to targeted substrates. Modulates amyloplast dynamics and sedimentation in statocytes during inflorescence, hypocotyl and root gravitropism, probably by regulating amyloplast interaction with actin filaments (AFs) in endodermal cells. This chain is E3 ubiquitin-protein ligase SGR9, amyloplastic (SGR9), found in Arabidopsis thaliana (Mouse-ear cress).